We begin with the raw amino-acid sequence, 312 residues long: MKRSRGSSDSLSGFLPIRHSTTDKQISPRPTTTGFLYSGAGDYSQMFDALEDDGSLEDLGGVGHASSTAAEKKRRLGVEQVKALEKNFEIDNKLEPERKVKLAQELGLQPRQVAIWFQNRRARWKTKQLERDYGVLKSNFDALKRNRDSLQRDNDSLLGQIKELKAKLNVEGVKGIEENGALKAVEANQSVMANNEVLELSHRSPSPPPHIPTDAPTSELAFEMFSIFPRTENFRDDPADSSDSSAVLNEEYSPNTVEAAGAVAATTVEMSTMGCFSQFVKMEEHEDLFSGEEACKLFADNEQWYCSDQWNS.

Residues 1–33 are disordered; it reads MKRSRGSSDSLSGFLPIRHSTTDKQISPRPTTT. The span at 23 to 33 shows a compositional bias: polar residues; the sequence is DKQISPRPTTT. Positions 69–128 form a DNA-binding region, homeobox; sequence AAEKKRRLGVEQVKALEKNFEIDNKLEPERKVKLAQELGLQPRQVAIWFQNRRARWKTKQ. The leucine-zipper stretch occupies residues 129–164; the sequence is LERDYGVLKSNFDALKRNRDSLQRDNDSLLGQIKEL.

The protein belongs to the HD-ZIP homeobox family. Class I subfamily. In terms of assembly, interacts with DNA as homodimer. Widely expressed.

It is found in the nucleus. Its function is as follows. Probable transcription factor that acts as a positive regulator of ABA-responsiveness, mediating the inhibitory effect of ABA on growth during seedling establishment. Binds to the DNA sequence 5'-CAATNATTG-3'. This chain is Homeobox-leucine zipper protein ATHB-5 (ATHB-5), found in Arabidopsis thaliana (Mouse-ear cress).